The following is a 154-amino-acid chain: IQ domain-containing protein F3 (154 aa).

Residues 89–118 (QEQATVKLQSCIRMWQCRQCYRQMCNALCL) form the IQ domain.

In Homo sapiens (Human), this protein is IQ domain-containing protein F3 (IQCF3).